A 145-amino-acid chain; its full sequence is Transthyretin (145 aa).

Positions 1–20 are cleaved as a signal peptide; that stretch reads MASHRLFLLCLAGLVFMSEA. C28 carries the sulfocysteine modification. Residue K33 participates in L-thyroxine binding. E60 is modified (4-carboxyglutamate). S70 carries the post-translational modification Phosphoserine. Residue E72 coordinates L-thyroxine. N-linked (GlcNAc...) asparagine glycosylation occurs at N116. S135 serves as a coordination point for L-thyroxine.

This sequence belongs to the transthyretin family. Homotetramer. Dimer of dimers. In the homotetramer, subunits assemble around a central channel that can accommodate two ligand molecules. Interacts with RBP4. Post-translationally, sulfonation of the reactive cysteine Cys-28 enhances the stability of the native conformation of TTR, avoiding misassembly of the protein leading to amyloid formation.

The protein resides in the secreted. In terms of biological role, thyroid hormone-binding protein. Probably transports thyroxine from the bloodstream to the brain. The chain is Transthyretin (TTR) from Erinaceus europaeus (Western European hedgehog).